Consider the following 116-residue polypeptide: Ribosome-binding factor A (116 aa).

The protein belongs to the RbfA family. In terms of assembly, monomer. Binds 30S ribosomal subunits, but not 50S ribosomal subunits or 70S ribosomes.

It localises to the cytoplasm. One of several proteins that assist in the late maturation steps of the functional core of the 30S ribosomal subunit. Associates with free 30S ribosomal subunits (but not with 30S subunits that are part of 70S ribosomes or polysomes). Required for efficient processing of 16S rRNA. May interact with the 5'-terminal helix region of 16S rRNA. In Streptococcus equi subsp. zooepidemicus (strain H70), this protein is Ribosome-binding factor A.